The sequence spans 78 residues: Probable [Fe-S]-dependent transcriptional repressor (78 aa).

Positions 56, 61, 64, and 70 each coordinate iron-sulfur cluster.

It belongs to the FeoC family.

May function as a transcriptional regulator that controls feoABC expression. This Cronobacter sakazakii (strain ATCC BAA-894) (Enterobacter sakazakii) protein is Probable [Fe-S]-dependent transcriptional repressor.